The following is a 209-amino-acid chain: Uracil phosphoribosyltransferase (209 aa).

5-phospho-alpha-D-ribose 1-diphosphate is bound by residues Arg-79, Arg-104, and 131–139 (DPMLATGGT). Uracil contacts are provided by residues Ile-194 and 199 to 201 (GDA). Asp-200 is a 5-phospho-alpha-D-ribose 1-diphosphate binding site.

This sequence belongs to the UPRTase family. The cofactor is Mg(2+).

It carries out the reaction UMP + diphosphate = 5-phospho-alpha-D-ribose 1-diphosphate + uracil. The protein operates within pyrimidine metabolism; UMP biosynthesis via salvage pathway; UMP from uracil: step 1/1. With respect to regulation, allosterically activated by GTP. Catalyzes the conversion of uracil and 5-phospho-alpha-D-ribose 1-diphosphate (PRPP) to UMP and diphosphate. This Pseudoalteromonas translucida (strain TAC 125) protein is Uracil phosphoribosyltransferase.